The following is a 113-amino-acid chain: Hydrogenase maturation factor HypA (113 aa).

His-2 provides a ligand contact to Ni(2+). Residues Cys-73, Cys-76, Cys-89, and Cys-92 each contribute to the Zn(2+) site.

The protein belongs to the HypA/HybF family.

Its function is as follows. Involved in the maturation of [NiFe] hydrogenases. Required for nickel insertion into the metal center of the hydrogenase. In Xanthobacter autotrophicus (strain ATCC BAA-1158 / Py2), this protein is Hydrogenase maturation factor HypA.